The following is a 342-amino-acid chain: Ribosomal RNA small subunit methyltransferase C (342 aa).

This sequence belongs to the methyltransferase superfamily. RsmC family. As to quaternary structure, monomer.

It is found in the cytoplasm. The enzyme catalyses guanosine(1207) in 16S rRNA + S-adenosyl-L-methionine = N(2)-methylguanosine(1207) in 16S rRNA + S-adenosyl-L-homocysteine + H(+). In terms of biological role, specifically methylates the guanine in position 1207 of 16S rRNA in the 30S particle. This Salmonella arizonae (strain ATCC BAA-731 / CDC346-86 / RSK2980) protein is Ribosomal RNA small subunit methyltransferase C.